Consider the following 187-residue polypeptide: UPF0301 protein KPN78578_33170 (187 aa).

The protein belongs to the UPF0301 (AlgH) family.

This chain is UPF0301 protein KPN78578_33170, found in Klebsiella pneumoniae subsp. pneumoniae (strain ATCC 700721 / MGH 78578).